A 90-amino-acid chain; its full sequence is RNA-binding protein Hfq (90 aa).

The region spanning 9 to 68 is the Sm domain; it reads DPFLNALRRERVPVSIYLVNGIKLQGQVESFDQFVILLKNTVSQMVYKHAISTVVPARPF.

It belongs to the Hfq family. Homohexamer.

In terms of biological role, RNA chaperone that binds small regulatory RNA (sRNAs) and mRNAs to facilitate mRNA translational regulation in response to envelope stress, environmental stress and changes in metabolite concentrations. Also binds with high specificity to tRNAs. The polypeptide is RNA-binding protein Hfq (Shewanella oneidensis (strain ATCC 700550 / JCM 31522 / CIP 106686 / LMG 19005 / NCIMB 14063 / MR-1)).